We begin with the raw amino-acid sequence, 244 residues long: Glucosamine-6-phosphate deaminase (244 aa).

Catalysis depends on aspartate 67, which acts as the Proton acceptor; for enolization step. Asparagine 136 (for ring-opening step) is an active-site residue. Histidine 138 acts as the Proton acceptor; for ring-opening step in catalysis. Glutamate 143 acts as the For ring-opening step in catalysis.

Belongs to the glucosamine/galactosamine-6-phosphate isomerase family. NagB subfamily.

The catalysed reaction is alpha-D-glucosamine 6-phosphate + H2O = beta-D-fructose 6-phosphate + NH4(+). The protein operates within amino-sugar metabolism; N-acetylneuraminate degradation; D-fructose 6-phosphate from N-acetylneuraminate: step 5/5. Catalyzes the reversible isomerization-deamination of glucosamine 6-phosphate (GlcN6P) to form fructose 6-phosphate (Fru6P) and ammonium ion. This Clostridium botulinum (strain Okra / Type B1) protein is Glucosamine-6-phosphate deaminase.